Consider the following 229-residue polypeptide: 2,3-bisphosphoglycerate-dependent phosphoglycerate mutase (229 aa).

Residues 8 to 15, 21 to 22, arginine 60, 87 to 90, lysine 98, 114 to 115, and 183 to 184 each bind substrate; these read RHGESAWN, TG, ERHY, RR, and GN. The Tele-phosphohistidine intermediate role is filled by histidine 9. The Proton donor/acceptor role is filled by glutamate 87.

This sequence belongs to the phosphoglycerate mutase family. BPG-dependent PGAM subfamily. As to quaternary structure, homodimer.

The catalysed reaction is (2R)-2-phosphoglycerate = (2R)-3-phosphoglycerate. Its pathway is carbohydrate degradation; glycolysis; pyruvate from D-glyceraldehyde 3-phosphate: step 3/5. Catalyzes the interconversion of 2-phosphoglycerate and 3-phosphoglycerate. The sequence is that of 2,3-bisphosphoglycerate-dependent phosphoglycerate mutase from Polynucleobacter necessarius subsp. necessarius (strain STIR1).